The sequence spans 916 residues: Translation initiation factor IF-2 (916 aa).

The tract at residues 55–324 (EPKAVTPTSK…NHNANLKPVT (270 aa)) is disordered. The segment covering 77–88 (AAEPKAAATKPA) has biased composition (low complexity). Composition is skewed to basic and acidic residues over residues 98–121 (FKAE…ERRN), 129–161 (RQKD…DNRN), and 198–212 (RQSE…EAKR). Residues 227–250 (KEQPTVEAAATAAPQAQPQTVEQV) are compositionally biased toward low complexity. Over residues 264–281 (ARPDKSRDFSHENEDGPK) the composition is skewed to basic and acidic residues. The segment covering 291-304 (KQNQVRNQKNSNWN) has biased composition (low complexity). Residues 305–314 (KKNKKSKNNR) are compositionally biased toward basic residues. Positions 418–585 (ERAPVVTIMG…TVLLVAEIQE (168 aa)) constitute a tr-type G domain. The G1 stretch occupies residues 427–434 (GHVDHGKT). 427-434 (GHVDHGKT) contacts GTP. The G2 stretch occupies residues 452 to 456 (GITQH). The segment at 473-476 (DTPG) is G3. Residues 473 to 477 (DTPGH) and 527 to 530 (NKID) each bind GTP. The segment at 527 to 530 (NKID) is G4. Residues 563-565 (SAK) are G5.

This sequence belongs to the TRAFAC class translation factor GTPase superfamily. Classic translation factor GTPase family. IF-2 subfamily.

Its subcellular location is the cytoplasm. In terms of biological role, one of the essential components for the initiation of protein synthesis. Protects formylmethionyl-tRNA from spontaneous hydrolysis and promotes its binding to the 30S ribosomal subunits. Also involved in the hydrolysis of GTP during the formation of the 70S ribosomal complex. This is Translation initiation factor IF-2 from Streptococcus mutans serotype c (strain ATCC 700610 / UA159).